Reading from the N-terminus, the 102-residue chain is Large ribosomal subunit protein bL21 (102 aa).

Belongs to the bacterial ribosomal protein bL21 family. As to quaternary structure, part of the 50S ribosomal subunit. Contacts protein L20.

This protein binds to 23S rRNA in the presence of protein L20. This chain is Large ribosomal subunit protein bL21, found in Geobacillus sp. (strain WCH70).